The sequence spans 282 residues: Protein-glutamine deamidase Cif (282 aa).

The segment at 1-16 (MKDITLPPPTSASCLT) is translocation domain (TD). Residues Cys-109, His-165, and Gln-185 contribute to the active site.

This sequence belongs to the Cif family.

The protein localises to the secreted. It localises to the host nucleus. The enzyme catalyses L-glutaminyl-[protein] + H2O = L-glutamyl-[protein] + NH4(+). Its function is as follows. Protein-glutamine deamidase effector that inhibits the host cell cycle and other key cellular processes such as the actin network and programmed-cell death. Acts by mediating the side chain deamidation of 'Gln-40' of host NEDD8, converting it to glutamate, thereby abolishing the activity of cullin-RING-based E3 ubiquitin-protein ligase complexes (CRL complexes). Inactivation of CRL complexes prevents ubiquitination and subsequent degradation of the cyclin-dependent kinase inhibitors CDKN1A/p21 and CDKN1B/p27, leading to G1 and G2 cell cycle arrests in host cells. Also able to catalyze deamidation of 'Gln-40' of host ubiquitin in vitro; however, NEDD8 constitutes the preferred substrate in vivo. This is Protein-glutamine deamidase Cif from Escherichia coli.